A 223-amino-acid polypeptide reads, in one-letter code: 2-phospho-L-lactate guanylyltransferase (223 aa).

Belongs to the CofC family. In terms of assembly, homodimer.

The catalysed reaction is (2S)-2-phospholactate + GTP + H(+) = (2S)-lactyl-2-diphospho-5'-guanosine + diphosphate. It participates in cofactor biosynthesis; coenzyme F420 biosynthesis. Guanylyltransferase that catalyzes the activation of (2S)-2-phospholactate (2-PL) as (2S)-lactyl-2-diphospho-5'-guanosine, via the condensation of 2-PL with GTP. It is involved in the biosynthesis of coenzyme F420, a hydride carrier cofactor. This chain is 2-phospho-L-lactate guanylyltransferase, found in Methanothermobacter thermautotrophicus (strain ATCC 29096 / DSM 1053 / JCM 10044 / NBRC 100330 / Delta H) (Methanobacterium thermoautotrophicum).